The sequence spans 356 residues: Gluconolactonase (356 aa).

Residues 1-35 constitute a signal peptide (tat-type signal); it reads MTTGRMSRRECLSAAVMVPIAAMTATATITGSAQA.

In terms of assembly, homodimer. Predicted to be exported by the Tat system. The position of the signal peptide cleavage has been experimentally proven.

It is found in the periplasm. The enzyme catalyses D-glucono-1,5-lactone + H2O = D-gluconate + H(+). The protein operates within carbohydrate acid metabolism; D-gluconate biosynthesis; D-gluconate from D-glucono-1,5-lactone: step 1/1. Hydrolyzes the gluconolactone formed by glucose-fructose oxidoreductase, and that formed in aerobic conditions by the glucose dehydrogenase present. This chain is Gluconolactonase (gnl), found in Zymomonas mobilis subsp. mobilis (strain ATCC 31821 / ZM4 / CP4).